Reading from the N-terminus, the 52-residue chain is ATP synthase protein 8 (52 aa).

A helical transmembrane segment spans residues 7–23; it reads MMWFSLFIMFSMTMMLF.

Belongs to the ATPase protein 8 family. In terms of assembly, F-type ATPases have 2 components, CF(1) - the catalytic core - and CF(0) - the membrane proton channel.

The protein resides in the mitochondrion membrane. Mitochondrial membrane ATP synthase (F(1)F(0) ATP synthase or Complex V) produces ATP from ADP in the presence of a proton gradient across the membrane which is generated by electron transport complexes of the respiratory chain. F-type ATPases consist of two structural domains, F(1) - containing the extramembraneous catalytic core and F(0) - containing the membrane proton channel, linked together by a central stalk and a peripheral stalk. During catalysis, ATP synthesis in the catalytic domain of F(1) is coupled via a rotary mechanism of the central stalk subunits to proton translocation. Part of the complex F(0) domain. Minor subunit located with subunit a in the membrane. The chain is ATP synthase protein 8 (MT-ATP8) from Locusta migratoria (Migratory locust).